A 156-amino-acid chain; its full sequence is Small ribosomal subunit protein uS7 (156 aa).

It belongs to the universal ribosomal protein uS7 family. As to quaternary structure, part of the 30S ribosomal subunit. Contacts proteins S9 and S11.

One of the primary rRNA binding proteins, it binds directly to 16S rRNA where it nucleates assembly of the head domain of the 30S subunit. Is located at the subunit interface close to the decoding center, probably blocks exit of the E-site tRNA. In Phytoplasma australiense, this protein is Small ribosomal subunit protein uS7.